Here is a 171-residue protein sequence, read N- to C-terminus: 3-hydroxyanthranilate 3,4-dioxygenase (171 aa).

An O2-binding site is contributed by Arg-45. His-49, Glu-55, and His-93 together coordinate Fe cation. Glu-55 contacts substrate. Positions 97 and 107 each coordinate substrate. 4 residues coordinate a divalent metal cation: Cys-122, Cys-125, Cys-159, and Cys-162.

This sequence belongs to the 3-HAO family. Fe(2+) is required as a cofactor.

The protein localises to the cytoplasm. It catalyses the reaction 3-hydroxyanthranilate + O2 = (2Z,4Z)-2-amino-3-carboxymuconate 6-semialdehyde. Its pathway is cofactor biosynthesis; NAD(+) biosynthesis; quinolinate from L-kynurenine: step 3/3. Its function is as follows. Catalyzes the oxidative ring opening of 3-hydroxyanthranilate to 2-amino-3-carboxymuconate semialdehyde, which spontaneously cyclizes to quinolinate. This Candida albicans (strain SC5314 / ATCC MYA-2876) (Yeast) protein is 3-hydroxyanthranilate 3,4-dioxygenase.